The primary structure comprises 146 residues: Hemoglobin subunit delta (146 aa).

The region spanning 2–146 is the Globin domain; that stretch reads HLTGDEKSAV…VATALAHKYH (145 aa). Ser50 is subject to Phosphoserine. Heme b-binding residues include His63 and His92.

It belongs to the globin family. As to quaternary structure, heterotetramer of two delta chains and two alpha chains. Red blood cells.

The protein is Hemoglobin subunit delta (HBD) of Aotus trivirgatus (Three-striped night monkey).